The following is a 155-amino-acid chain: Interleukin-2 (155 aa).

Residues 1–20 form the signal peptide; the sequence is MYKMQLLSCIALTLVLVANS. Residue Thr23 is glycosylated (O-linked (GalNAc...) threonine). An intrachain disulfide couples Cys79 to Cys127.

The protein belongs to the IL-2 family.

The protein localises to the secreted. Its function is as follows. Cytokine produced by activated CD4-positive helper T-cells and to a lesser extend activated CD8-positive T-cells and natural killer (NK) cells that plays pivotal roles in the immune response and tolerance. Binds to a receptor complex composed of either the high-affinity trimeric IL-2R (IL2RA/CD25, IL2RB/CD122 and IL2RG/CD132) or the low-affinity dimeric IL-2R (IL2RB and IL2RG). Interaction with the receptor leads to oligomerization and conformation changes in the IL-2R subunits resulting in downstream signaling starting with phosphorylation of JAK1 and JAK3. In turn, JAK1 and JAK3 phosphorylate the receptor to form a docking site leading to the phosphorylation of several substrates including STAT5. This process leads to activation of several pathways including STAT, phosphoinositide-3-kinase/PI3K and mitogen-activated protein kinase/MAPK pathways. Functions as a T-cell growth factor and can increase NK-cell cytolytic activity as well. Promotes strong proliferation of activated B-cells and subsequently immunoglobulin production. Plays a pivotal role in regulating the adaptive immune system by controlling the survival and proliferation of regulatory T-cells, which are required for the maintenance of immune tolerance. Moreover, participates in the differentiation and homeostasis of effector T-cell subsets, including Th1, Th2, Th17 as well as memory CD8-positive T-cells. The sequence is that of Interleukin-2 (IL2) from Halichoerus grypus (Gray seal).